A 263-amino-acid chain; its full sequence is MARGPKKHLKRVAAPKHWMLDKLTGVFAPRPSTGPHKLRECLPLIIFLRNRLKYALTGDEVKKICMQRFIKIDGKVRTDITYPAGFMDVISIEKTGEHFRLVYDTKGRFAVHRITAEEAKYKLCKVRKTWVGTKGIPHLVTHDARTIRYPDPLIKVNDTIQIDLETGKITDFIKFDTGNLCMVTGGANLGRIGVITNRERHPGSFDVVHVKDANGNSFATRLSNIFVIGKGNKPWISLPRGKGIRLTIAEERDKRLAAKQSSG.

The region spanning 42–104 (LPLIIFLRNR…TGEHFRLVYD (63 aa)) is the S4 RNA-binding domain.

The protein belongs to the eukaryotic ribosomal protein eS4 family. Component of the small ribosomal subunit.

Its subcellular location is the cytoplasm. In terms of biological role, component of the small ribosomal subunit. The ribosome is a large ribonucleoprotein complex responsible for the synthesis of proteins in the cell. The sequence is that of Small ribosomal subunit protein eS4 (rps4) from Xenopus tropicalis (Western clawed frog).